A 501-amino-acid polypeptide reads, in one-letter code: GTPase Obg (501 aa).

Positions asparagine 2 to methionine 159 constitute an Obg domain. In terms of domain architecture, OBG-type G spans alanine 160 to glutamine 341. GTP contacts are provided by residues glycine 166 to serine 173, phenylalanine 191 to glutamine 195, aspartate 212 to glycine 215, asparagine 292 to aspartate 295, and serine 322 to valine 324. 2 residues coordinate Mg(2+): serine 173 and threonine 193. Positions valine 362 to proline 442 constitute an OCT domain.

Belongs to the TRAFAC class OBG-HflX-like GTPase superfamily. OBG GTPase family. Monomer. Mg(2+) serves as cofactor.

The protein localises to the cytoplasm. In terms of biological role, an essential GTPase which binds GTP, GDP and possibly (p)ppGpp with moderate affinity, with high nucleotide exchange rates and a fairly low GTP hydrolysis rate. Plays a role in control of the cell cycle, stress response, ribosome biogenesis and in those bacteria that undergo differentiation, in morphogenesis control. This chain is GTPase Obg, found in Corynebacterium glutamicum (strain R).